A 676-amino-acid chain; its full sequence is Symportin 1 (676 aa).

Positions 1–10 (MGKTRRNRVR) are enriched in basic residues. The segment at 1–28 (MGKTRRNRVRNRTDPIAKPVKPPTDPEL) is disordered. An ARM 1 repeat occupies 183-216 (TILRLLFRLISADIAPQDIYEEAISCLTTLSEDN). Residues 325 to 385 (KGNQGSRESP…EDDEDDDDDS (61 aa)) are disordered. 2 stretches are compositionally biased toward acidic residues: residues 338 to 354 (ADEE…DAMD) and 363 to 385 (EDQE…DDDS). An ARM 2 repeat occupies 420–453 (TAVPQLIRLSNLPIDSDESLTIQSHALSALNNIS).

Belongs to the nuclear import and ribosome assembly adapter family. Component of a hexameric 5S RNP precursor complex, composed of 5S RNA, RRS1, RPF2, RPL5, RPL11 and SYO1; this complex acts as a precursor for ribosome assembly.

Involved in ribosomal large subunit assembly. The chain is Symportin 1 from Chaetomium thermophilum (strain DSM 1495 / CBS 144.50 / IMI 039719) (Thermochaetoides thermophila).